The following is a 1375-amino-acid chain: DNA-directed RNA polymerase subunit beta (1375 aa).

Belongs to the RNA polymerase beta chain family. The RNAP catalytic core consists of 2 alpha, 1 beta, 1 beta' and 1 omega subunit. When a sigma factor is associated with the core the holoenzyme is formed, which can initiate transcription.

It carries out the reaction RNA(n) + a ribonucleoside 5'-triphosphate = RNA(n+1) + diphosphate. DNA-dependent RNA polymerase catalyzes the transcription of DNA into RNA using the four ribonucleoside triphosphates as substrates. The chain is DNA-directed RNA polymerase subunit beta from Malacoplasma penetrans (strain HF-2) (Mycoplasma penetrans).